We begin with the raw amino-acid sequence, 226 residues long: Putative integrase V10 (226 aa).

Catalysis depends on residues Arg-97, His-174, and Arg-177. The active-site O-(3'-phospho-DNA)-tyrosine intermediate is the Tyr-210.

It belongs to the 'phage' integrase family.

In terms of biological role, may catalyze site-specific integration of viral genome into host or helper virus DNA. The polypeptide is Putative integrase V10 (Acanthamoeba polyphaga (Amoeba)).